A 234-amino-acid polypeptide reads, in one-letter code: MLTYETWEENDISFSEEDETKGALSVLSWAYKEYENEIVYACSFGVEGMVLLHLINQVNPSAKVVFLDTNVHFQETYELIQKVRERFPSLNIIEKQPKLTLDEQAKLHGNKLWESNPNLCCKIRKILPLEESLANEKAWISGLRREQSETRKHTKFINQDHRFQSIKVCPLIHWTWKEVWRYVYKHSLPYNPLHDIGYPSIGCEKCTLPVGEGGDSRDGRWAGKVKTECGLHYQ.

[4Fe-4S] cluster is bound by residues C120, C121, C203, and C206. C229 serves as the catalytic Nucleophile; cysteine thiosulfonate intermediate.

It belongs to the PAPS reductase family. CysH subfamily. It depends on [4Fe-4S] cluster as a cofactor.

Its subcellular location is the cytoplasm. It carries out the reaction [thioredoxin]-disulfide + sulfite + AMP + 2 H(+) = adenosine 5'-phosphosulfate + [thioredoxin]-dithiol. The protein operates within sulfur metabolism; hydrogen sulfide biosynthesis; sulfite from sulfate. Its function is as follows. Catalyzes the formation of sulfite from adenosine 5'-phosphosulfate (APS) using thioredoxin as an electron donor. This chain is Adenosine 5'-phosphosulfate reductase, found in Bacillus thuringiensis subsp. konkukian (strain 97-27).